The following is a 539-amino-acid chain: DNA damage-binding protein CMR1 (539 aa).

Residues 22-89 are disordered; the sequence is LNLPTEAKKE…ALKQEDLGGS (68 aa). The segment covering 27–39 has biased composition (basic and acidic residues); the sequence is EAKKESVDPEVAP. 6 WD repeats span residues 182 to 223, 226 to 268, 316 to 356, 377 to 415, 462 to 505, and 508 to 539; these read VTKE…EPLQ, LHHA…DVLD, LGEK…TART, NSRL…LDML, GRWV…LAHL, and ALMT…YWWE.

It belongs to the WD repeat DDB2/WDR76 family.

Its function is as follows. DNA-binding protein that binds to both single- and double-stranded DNA. Binds preferentially to UV-damaged DNA. May be involved in DNA-metabolic processes. The sequence is that of DNA damage-binding protein CMR1 from Yarrowia lipolytica (strain CLIB 122 / E 150) (Yeast).